The chain runs to 485 residues: UDP-glycosyltransferase 91D1 (485 aa).

UDP-alpha-D-glucose is bound by residues Ser296, 355–356 (WA), 373–381 (HCGSGSIVE), and 395–398 (FCDQ).

The protein belongs to the UDP-glycosyltransferase family.

May glycosylate diterpenes or flavonols in leaves. This chain is UDP-glycosyltransferase 91D1, found in Stevia rebaudiana (Stevia).